Here is a 389-residue protein sequence, read N- to C-terminus: Innexin-6 (389 aa).

4 helical membrane-spanning segments follow: residues 36-56 (VVILAVSSALLLSSHFIGDPI), 111-131 (VFALQAFLFYIPRFIWKAMIA), 190-210 (LFYTLSTVWQAVNAWIQFYIL), and 276-296 (LFIFLWFWLVFVAVVSTVNCF).

Belongs to the pannexin family.

It localises to the cell membrane. Its subcellular location is the cell junction. It is found in the gap junction. In terms of biological role, structural component of the gap junctions. This chain is Innexin-6 (inx-6), found in Caenorhabditis elegans.